Reading from the N-terminus, the 288-residue chain is Energy-coupling factor transporter ATP-binding protein EcfA2 (288 aa).

Residues 3–246 enclose the ABC transporter domain; that stretch reads IKLEQLGYCY…PDELVDLGLS (244 aa). ATP is bound at residue 40–47; that stretch reads GHTGSGKS.

Belongs to the ABC transporter superfamily. Energy-coupling factor EcfA family. As to quaternary structure, forms a stable energy-coupling factor (ECF) transporter complex composed of 2 membrane-embedded substrate-binding proteins (S component), 2 ATP-binding proteins (A component) and 2 transmembrane proteins (T component).

Its subcellular location is the cell membrane. Functionally, ATP-binding (A) component of a common energy-coupling factor (ECF) ABC-transporter complex. Unlike classic ABC transporters this ECF transporter provides the energy necessary to transport a number of different substrates. This is Energy-coupling factor transporter ATP-binding protein EcfA2 from Listeria innocua serovar 6a (strain ATCC BAA-680 / CLIP 11262).